An 82-amino-acid polypeptide reads, in one-letter code: Small ribosomal subunit protein uS17 (82 aa).

Belongs to the universal ribosomal protein uS17 family. As to quaternary structure, part of the 30S ribosomal subunit.

In terms of biological role, one of the primary rRNA binding proteins, it binds specifically to the 5'-end of 16S ribosomal RNA. This is Small ribosomal subunit protein uS17 from Rhodopseudomonas palustris (strain TIE-1).